The chain runs to 401 residues: tRNA(Ile)-lysidine synthase (401 aa).

Position 17–22 (17–22 (SGGPDS)) interacts with ATP.

Belongs to the tRNA(Ile)-lysidine synthase family.

It is found in the cytoplasm. The enzyme catalyses cytidine(34) in tRNA(Ile2) + L-lysine + ATP = lysidine(34) in tRNA(Ile2) + AMP + diphosphate + H(+). Ligates lysine onto the cytidine present at position 34 of the AUA codon-specific tRNA(Ile) that contains the anticodon CAU, in an ATP-dependent manner. Cytidine is converted to lysidine, thus changing the amino acid specificity of the tRNA from methionine to isoleucine. The chain is tRNA(Ile)-lysidine synthase from Mycoplasma mycoides subsp. mycoides SC (strain CCUG 32753 / NCTC 10114 / PG1).